Consider the following 71-residue polypeptide: Ranatuerin-2Va (71 aa).

The N-terminal stretch at 1–22 is a signal peptide; the sequence is MFTLKKSFLLLFFLGTITLSLC. A propeptide spanning residues 23–43 is cleaved from the precursor; that stretch reads EQERGADEDDGVEMTEEEVKR. A disulfide bridge connects residues Cys66 and Cys71.

In terms of tissue distribution, expressed by the skin glands.

The protein resides in the secreted. Antimicrobial peptide. This chain is Ranatuerin-2Va, found in Odorrana versabilis (Chinese bamboo leaf odorous frog).